The following is a 162-amino-acid chain: Endoribonuclease YbeY (162 aa).

3 residues coordinate Zn(2+): His-127, His-131, and His-137.

This sequence belongs to the endoribonuclease YbeY family. Zn(2+) serves as cofactor.

The protein localises to the cytoplasm. Single strand-specific metallo-endoribonuclease involved in late-stage 70S ribosome quality control and in maturation of the 3' terminus of the 16S rRNA. This is Endoribonuclease YbeY from Acetivibrio thermocellus (strain ATCC 27405 / DSM 1237 / JCM 9322 / NBRC 103400 / NCIMB 10682 / NRRL B-4536 / VPI 7372) (Clostridium thermocellum).